The following is a 291-amino-acid chain: 4-hydroxy-tetrahydrodipicolinate synthase (291 aa).

T44 contributes to the pyruvate binding site. The active-site Proton donor/acceptor is the Y132. Catalysis depends on K160, which acts as the Schiff-base intermediate with substrate. V202 lines the pyruvate pocket.

This sequence belongs to the DapA family. Homotetramer; dimer of dimers.

It localises to the cytoplasm. It carries out the reaction L-aspartate 4-semialdehyde + pyruvate = (2S,4S)-4-hydroxy-2,3,4,5-tetrahydrodipicolinate + H2O + H(+). It functions in the pathway amino-acid biosynthesis; L-lysine biosynthesis via DAP pathway; (S)-tetrahydrodipicolinate from L-aspartate: step 3/4. Functionally, catalyzes the condensation of (S)-aspartate-beta-semialdehyde [(S)-ASA] and pyruvate to 4-hydroxy-tetrahydrodipicolinate (HTPA). This Clostridium perfringens (strain ATCC 13124 / DSM 756 / JCM 1290 / NCIMB 6125 / NCTC 8237 / Type A) protein is 4-hydroxy-tetrahydrodipicolinate synthase.